The primary structure comprises 400 residues: Formate-dependent phosphoribosylglycinamide formyltransferase (400 aa).

N(1)-(5-phospho-beta-D-ribosyl)glycinamide contacts are provided by residues 22 to 23 (EL) and E82. ATP contacts are provided by residues R115, K156, 161–166 (SSGKGQ), 196–199 (EGFI), and E204. One can recognise an ATP-grasp domain in the interval 120–309 (RLAAETLGLP…EFALHARAIL (190 aa)). Residues E268 and E280 each contribute to the Mg(2+) site. N(1)-(5-phospho-beta-D-ribosyl)glycinamide-binding positions include D287, K361, and 368–369 (RR).

This sequence belongs to the PurK/PurT family. In terms of assembly, homodimer.

The catalysed reaction is N(1)-(5-phospho-beta-D-ribosyl)glycinamide + formate + ATP = N(2)-formyl-N(1)-(5-phospho-beta-D-ribosyl)glycinamide + ADP + phosphate + H(+). The protein operates within purine metabolism; IMP biosynthesis via de novo pathway; N(2)-formyl-N(1)-(5-phospho-D-ribosyl)glycinamide from N(1)-(5-phospho-D-ribosyl)glycinamide (formate route): step 1/1. Functionally, involved in the de novo purine biosynthesis. Catalyzes the transfer of formate to 5-phospho-ribosyl-glycinamide (GAR), producing 5-phospho-ribosyl-N-formylglycinamide (FGAR). Formate is provided by PurU via hydrolysis of 10-formyl-tetrahydrofolate. The sequence is that of Formate-dependent phosphoribosylglycinamide formyltransferase from Xanthomonas oryzae pv. oryzae (strain PXO99A).